A 266-amino-acid polypeptide reads, in one-letter code: Ribonuclease HII (266 aa).

An RNase H type-2 domain is found at 73-266 (SPVAGVDEAG…NCGSRQKCEG (194 aa)). 3 residues coordinate a divalent metal cation: Asp-79, Glu-80, and Asp-173.

This sequence belongs to the RNase HII family. The cofactor is Mn(2+). It depends on Mg(2+) as a cofactor.

Its subcellular location is the cytoplasm. The enzyme catalyses Endonucleolytic cleavage to 5'-phosphomonoester.. Endonuclease that specifically degrades the RNA of RNA-DNA hybrids. This is Ribonuclease HII from Pelotomaculum thermopropionicum (strain DSM 13744 / JCM 10971 / SI).